Reading from the N-terminus, the 155-residue chain is Movement protein TGB3 (155 aa).

Topologically, residues 1 to 59 are cytoplasmic; it reads MAMPHPLECCCPQCLPSSESFPIYGEQEIPCSETQAETTPVEKTVRANVLTDILDDHYY. A helical transmembrane segment spans residues 60–80; that stretch reads AILASLFIIALWLLYIYLSSI. Over 81 to 130 the chain is Lumenal; sequence PTETGPYFYQDLNSVKIYGIGATNPEVIAAIHHWQKYPFGESPMWGGLIS. An Involved in plasmodesmata targeting and virus cell-to-cell movement motif is present at residues 89–93; the sequence is YQDLN. The helical transmembrane segment at 131–151 threads the bilayer; it reads VLSILLKPLTLVFALSFFLLL. The tract at residues 150 to 155 is required for attachment to the host plasmodesmata-associated membrane compartments; it reads LLSSKR. Over 152–155 the chain is Cytoplasmic; that stretch reads SSKR.

This sequence belongs to the virgaviridae TGB3 movement protein family. Interacts with movement proteins TGB1 and TGB2. TGB1-TGB3-TGB2 complex formation is enhanced by ATP hydrolysis.

Its subcellular location is the host cell junction. The protein resides in the host plasmodesma. The protein localises to the host endoplasmic reticulum membrane. It is found in the host cytoplasm. It localises to the host cytoskeleton. Participates in the transport of viral genome to neighboring plant cells directly through plasmodesmata, without any budding. TGBp2 and TGBp3 are necessary for intracellular delivery of TGBp1-containing vRNPs to plasmodesmata. Can gate plasmodesmata and increase their size exclusion limit. Induces host actin cytoskeleton network thickening, which probably plays a major role in virus cell-to-cell movement. The polypeptide is Movement protein TGB3 (Hordeum vulgare (Barley)).